Reading from the N-terminus, the 64-residue chain is U2-aranetoxin-Av1a (64 aa).

Expressed in fat body, but not in cephalothorax, silk gland, midgut.

In terms of biological role, insecticidal toxin. In Araneus ventricosus (Orbweaver spider), this protein is U2-aranetoxin-Av1a.